A 309-amino-acid polypeptide reads, in one-letter code: HPr kinase/phosphorylase (309 aa).

Residues His-138 and Lys-159 contribute to the active site. Gly-153–Ser-160 contributes to the ATP binding site. Mg(2+) is bound at residue Ser-160. The active-site Proton acceptor; for phosphorylation activity. Proton donor; for dephosphorylation activity is Asp-177. The important for the catalytic mechanism of both phosphorylation and dephosphorylation stretch occupies residues Ile-201–Asp-210. A Mg(2+)-binding site is contributed by Glu-202. Arg-243 is a catalytic residue. Positions Pro-264–Arg-269 are important for the catalytic mechanism of dephosphorylation.

This sequence belongs to the HPrK/P family. As to quaternary structure, homohexamer. It depends on Mg(2+) as a cofactor.

It catalyses the reaction [HPr protein]-L-serine + ATP = [HPr protein]-O-phospho-L-serine + ADP + H(+). The catalysed reaction is [HPr protein]-O-phospho-L-serine + phosphate + H(+) = [HPr protein]-L-serine + diphosphate. In terms of biological role, catalyzes the ATP- as well as the pyrophosphate-dependent phosphorylation of a specific serine residue in HPr, a phosphocarrier protein of the phosphoenolpyruvate-dependent sugar phosphotransferase system (PTS). HprK/P also catalyzes the pyrophosphate-producing, inorganic phosphate-dependent dephosphorylation (phosphorolysis) of seryl-phosphorylated HPr (P-Ser-HPr). The two antagonistic activities of HprK/P are regulated by several intracellular metabolites, which change their concentration in response to the absence or presence of rapidly metabolisable carbon sources (glucose, fructose, etc.) in the growth medium. Therefore, by controlling the phosphorylation state of HPr, HPrK/P is a sensor enzyme that plays a major role in the regulation of carbon metabolism and sugar transport: it mediates carbon catabolite repression (CCR), and regulates PTS-catalyzed carbohydrate uptake and inducer exclusion. In Alkaliphilus metalliredigens (strain QYMF), this protein is HPr kinase/phosphorylase.